The chain runs to 322 residues: MSGEVPPNINIKEPRWDQSTFIGRASHFFTVTDPKNILLTNEQLENARKVVHDYRQGIVPAGLTENELWRAKYAYDSAFHPDTGEKMTLIGRMSAQVPMNMTITGCMMTFYRTTPAVLFWQWINQSFNAVVNYTNRSGDAPLTVNELGTAYVSATTGAVATALGLNALTKHVSPLIGRFVPFAAVAAANCINIPLMRQRELKVGIPVTDENGTRLGESTNAAKQAITQVVISRILMAAPGMAIPPFIMNTLEKKAFLKRFPWMSAPIQVTLVGFCLVFATPLCCALFPQKSSMSVTSLEDDLQASIQKSHPELRRVYFNKGL.

Ser-2 carries the N-acetylserine modification. Topologically, residues 2 to 102 (SGEVPPNINI…MSAQVPMNMT (101 aa)) are mitochondrial matrix. A helical transmembrane segment spans residues 103–120 (ITGCMMTFYRTTPAVLFW). At 121–146 (QWINQSFNAVVNYTNRSGDAPLTVNE) the chain is on the mitochondrial intermembrane side. A helical transmembrane segment spans residues 147–167 (LGTAYVSATTGAVATALGLNA). Residues 168 to 174 (LTKHVSP) are Mitochondrial matrix-facing. Residues 175-195 (LIGRFVPFAAVAAANCINIPL) form a helical membrane-spanning segment. Topologically, residues 196-228 (MRQRELKVGIPVTDENGTRLGESTNAAKQAITQ) are mitochondrial intermembrane. Residues 229–249 (VVISRILMAAPGMAIPPFIMN) form a helical membrane-spanning segment. At 250–266 (TLEKKAFLKRFPWMSAP) the chain is on the mitochondrial matrix side. The chain crosses the membrane as a helical span at residues 267–287 (IQVTLVGFCLVFATPLCCALF). The Mitochondrial intermembrane segment spans residues 288–322 (PQKSSMSVTSLEDDLQASIQKSHPELRRVYFNKGL).

It belongs to the sideroflexin family.

The protein localises to the mitochondrion inner membrane. The enzyme catalyses L-serine(in) = L-serine(out). It carries out the reaction L-alanine(in) = L-alanine(out). It catalyses the reaction L-cysteine(in) = L-cysteine(out). In terms of biological role, amino acid transporter importing serine, an essential substrate of the mitochondrial branch of the one-carbon pathway, into mitochondria. Mitochondrial serine is then converted to glycine and formate, which exits to the cytosol where it is used to generate the charged folates that serve as one-carbon donors. May also transport other amino acids including alanine and cysteine. The protein is Sideroflexin-1 (Sfxn1) of Rattus norvegicus (Rat).